Here is a 333-residue protein sequence, read N- to C-terminus: GDP-mannose transporter GONST1 (333 aa).

9 helical membrane-spanning segments follow: residues 33–55, 62–84, 99–121, 153–170, 174–196, 216–238, 253–275, 282–304, and 308–325; these read ALLSGLAYCISSCSMILVNKFVL, AGIFLMLYQNFVSVIIVVGLSLM, VWFPVNVIFVGMLITSMFSLKYI, VWAALFLMIISAVSGGIT, FNAVGYAWQIANCFLTASYSLTL, SMVLLNNTLSLPLGLLLSYFFNE, FWMVMTLSGLLGLAISFTSMWFL, TYSLVGSLNKIPLSIAGIVLFNV, and LQNSASILFGLVAGVVFA.

The protein belongs to the nucleotide-sugar transporter family. GDP-Mannose:GMP antiporter (GMA) (TC 2.A.7.13) subfamily.

The protein resides in the golgi apparatus membrane. In terms of biological role, involved in the import of GDP-mannose from the cytoplasm into the Golgi lumen. Required for the luminal synthesis of a variety of plant cell surface components. Is required for the correct mannosylation of the glycosylinositol phosphoceramides (GIPC). Can indifferently transport GDP-mannose, GDP-Glucose, GDP-Fucose or GDP-Galactose in vitro. This is GDP-mannose transporter GONST1 from Arabidopsis thaliana (Mouse-ear cress).